The primary structure comprises 1403 residues: Mannuronan C5-epimerase AlgE1 (1403 aa).

7 PbH1 repeats span residues 133-155, 157-179, 180-202, 204-226, 257-279, 280-302, and 320-359; these read DRDVTLERVEIREMSGYGFDPHE, TINLTIRDSVAHDNSLDGFVADY, QVGGVFENNVSYNNDRHGFNIVT, TNDFVLSNNVAYGNGGAGLVVQR, AHDVTLQNAEIYGNGLYGVRVYG, AQDVQILDNQIHDNSQNGAYAEV, and TTGTWLEGNVISGSANSTYGIQERADGTDYSSLYANSIDG. 2 disordered regions span residues 372-395 and 408-428; these read STVSSQSGSGQQATLEGSAGNDAL and AGDDRLNGDAGNDILDGGAGR. Hemolysin-type calcium-binding repeat units lie at residues 388–403, 406–422, 424–440, 557–573, 574–591, 697–712, 716–732, and 734–750; these read GSAGNDALSGTEAHET, GQAGDDRLNGDAGNDIL, GGAGRDNLTGGAGADTF, GYGGNDTLNGGAGDDIL, VGGAGRDSLTGGAGADVF, EGTDGNDTLQGTEANE, GLDGRDNLNGGAGDDIL, and GGAGRDTLTGGTGADTF. PbH1 repeat units lie at residues 977-999, 1001-1023, 1024-1046, 1048-1070, 1101-1123, 1124-1146, 1163-1185, and 1190-1212; these read DRNVTIERVEIREMSGYGFDPHE, TINLTIRDSVAHDNGLDGFVADY, LVDSVFENNVAYNNDRHGFNIVT, TYDFVMTNNVAYGNGGAGLTIQR, TNNVTLQNAEIYGNGSSGVRLYG, TEDVQILDNQIHDNSQNGTYPEV, TLNTRIEGNLIDASDNANYAVRE, and SDYTTLVDNDISGGQVASVQLSG. 3 Hemolysin-type calcium-binding repeats span residues 1227–1243, 1244–1261, and 1263–1279; these read GTDGNDVLVGSDANDQL, YGGAGDDRLDGGAGDDLL, and GGAGRDDLTGGTGADTF.

This sequence belongs to the D-mannuronate C5-epimerase family. Ca(2+) serves as cofactor.

It localises to the secreted. The enzyme catalyses [(1-&gt;4)-beta-D-mannuronosyl](n) = [alginate](n). The protein operates within glycan biosynthesis; alginate biosynthesis. Inhibited by zinc. In terms of biological role, converts beta-D-mannuronic acid (M) to alpha-L-guluronic acid (G), producing a polymer with gel-forming capacity, required for the formation of the cyst coat. The protein is Mannuronan C5-epimerase AlgE1 of Azotobacter vinelandii.